The following is a 124-amino-acid chain: MPTINQLIRHGRKRLKKKSKSPALENNPQKRGVCVRVSTMTPKKPNSALRKIARVRLSNGTEVTAYIPGEGHNLQEHSVVLVRGGRVKDLPGVRYKIIRGALDAEGVANRRQSRSRYGAKKPKK.

Positions 11–20 are enriched in basic residues; it reads GRKRLKKKSK. The interval 11 to 30 is disordered; the sequence is GRKRLKKKSKSPALENNPQK. 3-methylthioaspartic acid is present on Asp-89. Residues 105-124 form a disordered region; the sequence is EGVANRRQSRSRYGAKKPKK. Positions 111 to 124 are enriched in basic residues; the sequence is RQSRSRYGAKKPKK.

The protein belongs to the universal ribosomal protein uS12 family. Part of the 30S ribosomal subunit. Contacts proteins S8 and S17. May interact with IF1 in the 30S initiation complex.

Its function is as follows. With S4 and S5 plays an important role in translational accuracy. Functionally, interacts with and stabilizes bases of the 16S rRNA that are involved in tRNA selection in the A site and with the mRNA backbone. Located at the interface of the 30S and 50S subunits, it traverses the body of the 30S subunit contacting proteins on the other side and probably holding the rRNA structure together. The combined cluster of proteins S8, S12 and S17 appears to hold together the shoulder and platform of the 30S subunit. The polypeptide is Small ribosomal subunit protein uS12 (Kosmotoga olearia (strain ATCC BAA-1733 / DSM 21960 / TBF 19.5.1)).